Reading from the N-terminus, the 501-residue chain is Glutamyl-tRNA(Gln) amidotransferase subunit A (501 aa).

Active-site charge relay system residues include K80 and S155. Residue S179 is the Acyl-ester intermediate of the active site.

It belongs to the amidase family. GatA subfamily. In terms of assembly, heterotrimer of A, B and C subunits.

It catalyses the reaction L-glutamyl-tRNA(Gln) + L-glutamine + ATP + H2O = L-glutaminyl-tRNA(Gln) + L-glutamate + ADP + phosphate + H(+). Allows the formation of correctly charged Gln-tRNA(Gln) through the transamidation of misacylated Glu-tRNA(Gln) in organisms which lack glutaminyl-tRNA synthetase. The reaction takes place in the presence of glutamine and ATP through an activated gamma-phospho-Glu-tRNA(Gln). The sequence is that of Glutamyl-tRNA(Gln) amidotransferase subunit A from Cupriavidus necator (strain ATCC 17699 / DSM 428 / KCTC 22496 / NCIMB 10442 / H16 / Stanier 337) (Ralstonia eutropha).